We begin with the raw amino-acid sequence, 597 residues long: HECT-type ubiquitin ligase-interacting protein creD (597 aa).

Disordered stretches follow at residues 375-398 (EVDPSGYRTPGPGSGPGTPFGTLS), 439-492 (ASEH…MATP), and 576-597 (SRSHSHSDDERRIRLTQARGRA). Residues 452-466 (GPPSGSNTHGSNTHA) are compositionally biased toward polar residues. The segment covering 472–483 (LSRRASDEDVHD) has biased composition (basic and acidic residues).

It belongs to the arrestin family. In terms of assembly, interacts with hulA.

Its function is as follows. Component of the regulatory network controlling carbon source utilization through ubiquitination and deubiquitination involving creA, creB, creC, creD and acrB. May be involved in signaling by recognizing appropriately phosphorylated substrates via its arrestin domains and then recruit a HECT-type ubiquitin ligase such as hulA, leading to ubiquitination of the substrate, providing a link between ubiquitination and phosphorylation in protein regulation and stability. The chain is HECT-type ubiquitin ligase-interacting protein creD (creD) from Emericella nidulans (strain FGSC A4 / ATCC 38163 / CBS 112.46 / NRRL 194 / M139) (Aspergillus nidulans).